The chain runs to 184 residues: FMRFamide-like neuropeptides 3 (184 aa).

The signal sequence occupies residues methionine 1–alanine 23. Positions threonine 24–proline 25 are excised as a propeptide. Residue phenylalanine 35 is modified to Phenylalanine amide. The propeptide occupies alanine 39–glutamine 73. A phenylalanine amide mark is found at phenylalanine 82, phenylalanine 95, phenylalanine 111, and phenylalanine 126. Positions phenylalanine 90 to arginine 110 are disordered. Positions glutamate 130 to glycine 142 are excised as a propeptide. The segment at leucine 150–lysine 184 is disordered. Residues phenylalanine 155, phenylalanine 171, and phenylalanine 182 each carry the phenylalanine amide modification.

The protein belongs to the FARP (FMRFamide related peptide) family. Each flp gene is expressed in a distinct set of neurons. Flp-3 is expressed in the IL1 and PQR neurons.

Its subcellular location is the secreted. Its function is as follows. FMRFamides and FMRFamide-like peptides are neuropeptides. SAEPFGTMRF-amide inhibits the activity of dissected pharyngeal myogenic muscle system. In Caenorhabditis elegans, this protein is FMRFamide-like neuropeptides 3.